A 404-amino-acid polypeptide reads, in one-letter code: N-acetylglucosamine-6-phosphate deacetylase (404 aa).

Glu143 contacts a divalent metal cation. Position 154-155 (154-155 (AH)) interacts with substrate. His211 and His232 together coordinate a divalent metal cation. Residues 235–236 (NA), Arg243, and 269–272 (DGIH) each bind substrate. The active-site Proton donor/acceptor is Asp294. 328–330 (LSG) provides a ligand contact to substrate.

The protein belongs to the metallo-dependent hydrolases superfamily. NagA family. A divalent metal cation serves as cofactor.

The catalysed reaction is N-acetyl-D-glucosamine 6-phosphate + H2O = D-glucosamine 6-phosphate + acetate. Its pathway is amino-sugar metabolism; N-acetylneuraminate degradation. Its function is as follows. Hydrolyzes the N-glycolyl group from N-glycolylglucosamine 6-phosphate (GlcNGc-6-P) in the N-glycolylneuraminic acid (Neu5Gc) degradation pathway. This is N-acetylglucosamine-6-phosphate deacetylase (amdhd2) from Danio rerio (Zebrafish).